Here is a 137-residue protein sequence, read N- to C-terminus: DNA polymerase III subunit psi (137 aa).

It belongs to the DNA polymerase III psi/HolD chain family. In terms of assembly, the DNA polymerase III holoenzyme complex contains at least 10 different subunits organized into 3 functionally essential subassemblies: the Pol III core, the beta sliding clamp processivity factor and the clamp-loading complex. The Pol III core (subunits alpha, epsilon and theta) contains the polymerase and the 3'-5' exonuclease proofreading activities. The polymerase is tethered to the template via the dimeric beta sliding clamp processivity factor. The clamp-loading complex (also called gamma complex) assembles the beta sliding clamp onto the primed template and plays a central role in the organization and communication at the replication fork. The clamp-loading complex contains delta, delta', psi and chi, and 3 copies of either or both of two different DnaX proteins, gamma and tau. The DNA replisome complex has a single clamp loader (3 tau and 1 each of delta, delta', psi and chi subunits) which binds 3 Pol III cores (1 core on the leading strand and 2 on the lagging strand) each with a beta sliding clamp dimer. Additional proteins in the replisome are other copies of gamma, psi (this protein) and chi (holC), SSB, DNA helicase and RNA primase. The clamp loader hydrolyzes ATP to assemble the beta processivity factor onto the primed template and plays a central role in the organization and communication at the replication fork. Interacts directly with the chi subunit (holC).

It catalyses the reaction DNA(n) + a 2'-deoxyribonucleoside 5'-triphosphate = DNA(n+1) + diphosphate. Functionally, part of the beta sliding clamp loading complex, which hydrolyzes ATP to load the beta clamp onto primed DNA to form the DNA replication pre-initiation complex. DNA polymerase III is a complex, multichain enzyme responsible for most of the replicative synthesis in bacteria. This DNA polymerase also exhibits 3' to 5' exonuclease activity. The chain is DNA polymerase III subunit psi from Escherichia coli (strain K12).